We begin with the raw amino-acid sequence, 648 residues long: Chaperone protein DnaK (648 aa).

Residue Thr-200 is modified to Phosphothreonine; by autocatalysis. The disordered stretch occupies residues 612-631 (QAGAAGAAGAAEGAAQGGAQ).

It belongs to the heat shock protein 70 family.

Acts as a chaperone. The protein is Chaperone protein DnaK of Burkholderia multivorans (strain ATCC 17616 / 249).